Consider the following 276-residue polypeptide: Large ribosomal subunit protein uL2 (276 aa).

The disordered stretch occupies residues 218 to 276 (PYVRGSAMNPVDHPHGGGEGRAPIGRPAPSTPWGKPALGLKTRKKNKKSNKYIVRRRKK). The segment covering 258-276 (KTRKKNKKSNKYIVRRRKK) has biased composition (basic residues).

The protein belongs to the universal ribosomal protein uL2 family. Part of the 50S ribosomal subunit. Forms a bridge to the 30S subunit in the 70S ribosome.

Its function is as follows. One of the primary rRNA binding proteins. Required for association of the 30S and 50S subunits to form the 70S ribosome, for tRNA binding and peptide bond formation. It has been suggested to have peptidyltransferase activity; this is somewhat controversial. Makes several contacts with the 16S rRNA in the 70S ribosome. The sequence is that of Large ribosomal subunit protein uL2 from Finegoldia magna (strain ATCC 29328 / DSM 20472 / WAL 2508) (Peptostreptococcus magnus).